The primary structure comprises 928 residues: Zinc metalloproteinase nas-39 (928 aa).

The N-terminal stretch at 1–30 is a signal peptide; the sequence is MRFSANIAIIVNIIFLFIVVEFVLPTFIRS. A Peptidase M12A domain is found at 48–247; the sequence is AATAKKERIW…RQTKKLYKCA (200 aa). Asn69 and Asn87 each carry an N-linked (GlcNAc...) asparagine glycan. 4 cysteine pairs are disulfide-bonded: Cys90-Cys246, Cys111-Cys133, Cys113-Cys114, and Cys249-Cys268. His141 provides a ligand contact to Zn(2+). Residue Glu142 is part of the active site. 2 residues coordinate Zn(2+): His145 and His151. CUB domains are found at residues 249-359 and 360-476; these read CGGT…YAIC and GGPI…FTKE. Residue Asn283 is glycosylated (N-linked (GlcNAc...) asparagine). 6 cysteine pairs are disulfide-bonded: Cys359–Cys385, Cys412–Cys439, Cys480–Cys491, Cys487–Cys500, Cys502–Cys515, and Cys519–Cys545. Residues 477-516 enclose the EGF-like 1; calcium-binding domain; that stretch reads LNECATDKNICHHYCVNTVGGFKCACRVGYSLSSNGFSCD. The 107-residue stretch at 519–625 folds into the CUB 3 domain; the sequence is CGGYLKASNG…DGFFANFIAD (107 aa). N-linked (GlcNAc...) asparagine glycosylation is found at Asn527 and Asn560. 8 disulfide bridges follow: Cys573–Cys587, Cys629–Cys640, Cys636–Cys649, Cys651–Cys664, Cys669–Cys695, Cys722–Cys744, Cys782–Cys812, and Cys840–Cys863. The EGF-like 2; calcium-binding domain maps to 626 to 665; sequence FDECQNDNAGCEHTCQNRLGSYVCTCNPGYILAEDKHNCK. CUB domains follow at residues 669–781 and 782–900; these read CFFE…YTSL and CGGR…YREA. A glycan (N-linked (GlcNAc...) asparagine) is linked at Asn694. A disordered region spans residues 895–928; the sequence is AEYREAPRSSSTKRTFVSKTRHSPLEEPIHDRNE. Polar residues predominate over residues 902 to 912; the sequence is RSSSTKRTFVS. The span at 917 to 928 shows a compositional bias: basic and acidic residues; sequence SPLEEPIHDRNE.

Requires Zn(2+) as cofactor. Expressed in pharyngeal, vulva and body wall muscles, intestine and several neurons.

Its subcellular location is the secreted. Its function is as follows. Metalloprotease. This Caenorhabditis elegans protein is Zinc metalloproteinase nas-39.